Here is a 204-residue protein sequence, read N- to C-terminus: Pyrrolidone-carboxylate peptidase (204 aa).

Catalysis depends on residues glutamate 80, cysteine 142, and histidine 165.

The protein belongs to the peptidase C15 family. Homotetramer.

The protein localises to the cytoplasm. It catalyses the reaction Release of an N-terminal pyroglutamyl group from a polypeptide, the second amino acid generally not being Pro.. In terms of biological role, removes 5-oxoproline from various penultimate amino acid residues except L-proline. In Lysinibacillus sphaericus (strain C3-41), this protein is Pyrrolidone-carboxylate peptidase.